The following is an 889-amino-acid chain: Translation initiation factor IF-2 (889 aa).

A disordered region spans residues Leu-158–Gln-296. The segment covering Ala-209–Thr-228 has biased composition (low complexity). Over residues Val-238 to Gly-270 the composition is skewed to basic and acidic residues. Residues Pro-391–Lys-560 form the tr-type G domain. Residues Gly-400–Thr-407 form a G1 region. Gly-400–Thr-407 contacts GTP. A G2 region spans residues Gly-425–His-429. The segment at Asp-446–Gly-449 is G3. GTP contacts are provided by residues Asp-446 to His-450 and Asn-500 to Asp-503. The interval Asn-500–Asp-503 is G4. The G5 stretch occupies residues Ser-536 to Lys-538.

The protein belongs to the TRAFAC class translation factor GTPase superfamily. Classic translation factor GTPase family. IF-2 subfamily.

The protein localises to the cytoplasm. One of the essential components for the initiation of protein synthesis. Protects formylmethionyl-tRNA from spontaneous hydrolysis and promotes its binding to the 30S ribosomal subunits. Also involved in the hydrolysis of GTP during the formation of the 70S ribosomal complex. This is Translation initiation factor IF-2 from Nitrosomonas europaea (strain ATCC 19718 / CIP 103999 / KCTC 2705 / NBRC 14298).